A 446-amino-acid chain; its full sequence is Oxysterols receptor LXR-beta (446 aa).

The segment covering 1 to 28 (MSSPTSSLDTPLPGNGSPQPSTSSTSPT) has biased composition (low complexity). The tract at residues 1–69 (MSSPTSSLDT…PERKRKKGPA (69 aa)) is disordered. Positions 1–76 (MSSPTSSLDT…GPAPKMLGHE (76 aa)) are transactivation AF-1; required for ligand-independent transactivation function. A DNA-binding region (nuclear receptor) is located at residues 75–152 (HELCRVCGDK…AGMREQCVLS (78 aa)). 2 NR C4-type zinc fingers span residues 78–98 (CRVCGDKASGFHYNVLSCEGC) and 116–140 (CRGSGTCQMDAFMRRKCQLCRLRKC). The disordered stretch occupies residues 160–201 (KIQKQQQQQPPPPTEPASGSSARPAASPGTSEASSQGSGEGE). The span at 175–196 (PASGSSARPAASPGTSEASSQG) shows a compositional bias: low complexity. Positions 205 to 446 (LTAAQELMIQ…LLSEIWDVHE (242 aa)) are transactivation AF-2; required for ligand-dependent transactivation function; mediates interaction with CCAR2. The NR LBD domain occupies 208–446 (AQELMIQQLV…LLSEIWDVHE (239 aa)). Glycyl lysine isopeptide (Lys-Gly) (interchain with G-Cter in SUMO2) cross-links involve residues lysine 395 and lysine 433.

The protein belongs to the nuclear hormone receptor family. NR1 subfamily. Forms a heterodimer with RXR. Interacts with CCAR2 (via N-terminus) in a ligand-independent manner. Interacts (when sumoylated) with GPS2; interaction with GPS2 onto hepatic acute phase protein promoters prevents N-Cor corepressor complex dissociation. Interacts with ABCA12 and ABCA1; this interaction is required for ABCA1 localization to the cell surface and is necessary for its normal activity and stability. Post-translationally, sumoylated by SUMO2 at Lys-395 and Lys-433 during the hepatic acute phase response, leading to promote interaction with GPS2 and prevent N-Cor corepressor complex dissociation.

It localises to the nucleus. Functionally, nuclear receptor that exhibits a ligand-dependent transcriptional activation activity. Binds preferentially to double-stranded oligonucleotide direct repeats having the consensus half-site sequence 5'-AGGTCA-3' and 4-nt spacing (DR-4). Regulates cholesterol uptake through MYLIP-dependent ubiquitination of LDLR, VLDLR and LRP8; DLDLR and LRP8. Interplays functionally with RORA for the regulation of genes involved in liver metabolism. Induces LPCAT3-dependent phospholipid remodeling in endoplasmic reticulum (ER) membranes of hepatocytes, driving SREBF1 processing and lipogenesis. Via LPCAT3, triggers the incorporation of arachidonate into phosphatidylcholines of ER membranes, increasing membrane dynamics and enabling triacylglycerols transfer to nascent very low-density lipoprotein (VLDL) particles. Via LPCAT3 also counteracts lipid-induced ER stress response and inflammation, likely by modulating SRC kinase membrane compartmentalization and limiting the synthesis of lipid inflammatory mediators. Plays an anti-inflammatory role during the hepatic acute phase response by acting as a corepressor: inhibits the hepatic acute phase response by preventing dissociation of the N-Cor corepressor complex. In Rattus norvegicus (Rat), this protein is Oxysterols receptor LXR-beta (Nr1h2).